The primary structure comprises 339 residues: Phosphoribosylformylglycinamidine cyclo-ligase (339 aa).

This sequence belongs to the AIR synthase family.

The protein localises to the cytoplasm. It carries out the reaction 2-formamido-N(1)-(5-O-phospho-beta-D-ribosyl)acetamidine + ATP = 5-amino-1-(5-phospho-beta-D-ribosyl)imidazole + ADP + phosphate + H(+). It participates in purine metabolism; IMP biosynthesis via de novo pathway; 5-amino-1-(5-phospho-D-ribosyl)imidazole from N(2)-formyl-N(1)-(5-phospho-D-ribosyl)glycinamide: step 2/2. In Methanobrevibacter smithii (strain ATCC 35061 / DSM 861 / OCM 144 / PS), this protein is Phosphoribosylformylglycinamidine cyclo-ligase.